We begin with the raw amino-acid sequence, 37 residues long: Large ribosomal subunit protein bL36 (37 aa).

This sequence belongs to the bacterial ribosomal protein bL36 family.

The protein is Large ribosomal subunit protein bL36 of Aromatoleum aromaticum (strain DSM 19018 / LMG 30748 / EbN1) (Azoarcus sp. (strain EbN1)).